We begin with the raw amino-acid sequence, 359 residues long: Ribosomal RNA large subunit methyltransferase M (359 aa).

Residues S186, 219-222 (CPGG), D238, D258, and D275 contribute to the S-adenosyl-L-methionine site. The active-site Proton acceptor is the K304.

Belongs to the class I-like SAM-binding methyltransferase superfamily. RNA methyltransferase RlmE family. RlmM subfamily. Monomer.

It is found in the cytoplasm. It carries out the reaction cytidine(2498) in 23S rRNA + S-adenosyl-L-methionine = 2'-O-methylcytidine(2498) in 23S rRNA + S-adenosyl-L-homocysteine + H(+). In terms of biological role, catalyzes the 2'-O-methylation at nucleotide C2498 in 23S rRNA. The chain is Ribosomal RNA large subunit methyltransferase M from Vibrio parahaemolyticus serotype O3:K6 (strain RIMD 2210633).